A 507-amino-acid chain; its full sequence is Glycogen synthase (507 aa).

K15 is a binding site for ADP-alpha-D-glucose.

The protein belongs to the glycosyltransferase 1 family. Bacterial/plant glycogen synthase subfamily.

It catalyses the reaction [(1-&gt;4)-alpha-D-glucosyl](n) + ADP-alpha-D-glucose = [(1-&gt;4)-alpha-D-glucosyl](n+1) + ADP + H(+). It functions in the pathway glycan biosynthesis; glycogen biosynthesis. Synthesizes alpha-1,4-glucan chains using ADP-glucose. In Rhodopirellula baltica (strain DSM 10527 / NCIMB 13988 / SH1), this protein is Glycogen synthase.